Here is a 123-residue protein sequence, read N- to C-terminus: Large ribosomal subunit protein bL12 (123 aa).

Belongs to the bacterial ribosomal protein bL12 family. In terms of assembly, homodimer. Part of the ribosomal stalk of the 50S ribosomal subunit. Forms a multimeric L10(L12)X complex, where L10 forms an elongated spine to which 2 to 4 L12 dimers bind in a sequential fashion. Binds GTP-bound translation factors.

Its function is as follows. Forms part of the ribosomal stalk which helps the ribosome interact with GTP-bound translation factors. Is thus essential for accurate translation. The chain is Large ribosomal subunit protein bL12 from Geobacillus kaustophilus (strain HTA426).